A 511-amino-acid polypeptide reads, in one-letter code: Histidine ammonia-lyase (511 aa).

Residues 143 to 145 constitute a cross-link (5-imidazolinone (Ala-Gly)); it reads ASG. Serine 144 is modified (2,3-didehydroalanine (Ser)).

This sequence belongs to the PAL/histidase family. Contains an active site 4-methylidene-imidazol-5-one (MIO), which is formed autocatalytically by cyclization and dehydration of residues Ala-Ser-Gly.

Its subcellular location is the cytoplasm. The catalysed reaction is L-histidine = trans-urocanate + NH4(+). The protein operates within amino-acid degradation; L-histidine degradation into L-glutamate; N-formimidoyl-L-glutamate from L-histidine: step 1/3. In Vibrio parahaemolyticus serotype O3:K6 (strain RIMD 2210633), this protein is Histidine ammonia-lyase.